A 472-amino-acid chain; its full sequence is MSTAAVQDARKQAEALDNEDSIAFVRDEFNIPTKAQIASSRLADSHPAALPASEDDAKCIYLCGNSLGVQPKRTVTRLNQYLTTWATQGVQGHFKPLEESPLPTWLDADAKAAELIAPVVGANVSEVAVMQTLTANIHLLMSAFYRPDINGRHKIILENKAFPSDHFAVETQIRHHSLSTEKSMVLIESSSKDNIISTEEVLSVISAHADTTALLLLPGIQYYTGQLLDIPAITAFAHKHGIFVIWDLAHAVGNVPLYLHDWGVDAAAWCSYKYLNGGPGCIGGLFVHTNNSVVTKEITDEKPEEGYNNRLAGWWGNDKKTRFVMANKFHPVAGAAGFQLSNPSILDITSLSASLEIFQEAGGMEALRSKSLKLTSFLEATLGHMKEEDRAHFRIITPSKSEERGAQLSLMLSDGLLDTVMKELEARGVIVDERKPNVIRVAPAPLYNTFKDCVLFVEAFSAALEVAKQHAL.

Pyridoxal 5'-phosphate contacts are provided by residues leucine 133, threonine 134, 162–165 (FPSD), aspartate 247, histidine 250, and tyrosine 272. Lysine 273 carries the N6-(pyridoxal phosphate)lysine modification. The pyridoxal 5'-phosphate site is built by tryptophan 314 and asparagine 342.

The protein belongs to the kynureninase family. Homodimer. Pyridoxal 5'-phosphate serves as cofactor.

The protein resides in the cytoplasm. The enzyme catalyses L-kynurenine + H2O = anthranilate + L-alanine + H(+). It carries out the reaction 3-hydroxy-L-kynurenine + H2O = 3-hydroxyanthranilate + L-alanine + H(+). It functions in the pathway amino-acid degradation; L-kynurenine degradation; L-alanine and anthranilate from L-kynurenine: step 1/1. Its pathway is cofactor biosynthesis; NAD(+) biosynthesis; quinolinate from L-kynurenine: step 2/3. Its function is as follows. Catalyzes the cleavage of L-kynurenine (L-Kyn) and L-3-hydroxykynurenine (L-3OHKyn) into anthranilic acid (AA) and 3-hydroxyanthranilic acid (3-OHAA), respectively. The protein is Kynureninase 2 (kyn-2) of Neurospora crassa (strain ATCC 24698 / 74-OR23-1A / CBS 708.71 / DSM 1257 / FGSC 987).